The primary structure comprises 381 residues: MLLSIGMLMLSATQIYTIVTVQLFAFLNLLPVEADILAYNFENGTQTFDDLPARFGYRLPAEGLKGFLINSKPENACEPIAPPPLRDNSSTAFIVLIRRLECNFDIKVLNAQRAGYKAAIVHNVDSDDLISMGSNDIEILKKIDIPSVFIGEASANSLKEEFTYEKGGHVVLIPEFSLPLEYYLIPFLIIVGICLILIVIFMITKFVQDRHRARRNRLRKDQLKKLPVHKFKKGDEYDVCAICLDEYEDGDKLRILPCSHAYHCKCVDPWLTKTKKTCPVCKQKVVPSQGDSDSETDSSQEENEVSENTPLLRPLASVSTQSFGALSESHSHQNMTESSEYEEDDNDNIDSSDAESGVNEESVVVQLQPNDERDYRVTNTV.

The signal sequence occupies residues 1-34 (MLLSIGMLMLSATQIYTIVTVQLFAFLNLLPVEA). Over 35 to 182 (DILAYNFENG…IPEFSLPLEY (148 aa)) the chain is Lumenal. A PA domain is found at 64–160 (LKGFLINSKP…GEASANSLKE (97 aa)). N-linked (GlcNAc...) asparagine glycosylation is present at Asn-88. Residues 183 to 203 (YLIPFLIIVGICLILIVIFMI) form a helical membrane-spanning segment. Over 204 to 381 (TKFVQDRHRA…ERDYRVTNTV (178 aa)) the chain is Cytoplasmic. An RING-type; atypical zinc finger spans residues 240–282 (CAICLDEYEDGDKLRILPCSHAYHCKCVDPWLTKTKKTCPVCK). The segment at 285-381 (VVPSQGDSDS…ERDYRVTNTV (97 aa)) is disordered. Composition is skewed to acidic residues over residues 292-305 (SDSE…ENEV) and 339-353 (SEYE…DSSD). Positions 370–381 (NDERDYRVTNTV) are enriched in basic and acidic residues.

As to expression, widely expressed (at protein level). Lowest levels in the liver, moderate levels in the heart, intestine and spleen, and high levels in skeletal muscle, kidney, proventriculus and brain. Also expressed in inner ear after noise exposure.

Its subcellular location is the endoplasmic reticulum membrane. The protein resides in the late endosome membrane. It is found in the lysosome membrane. The protein localises to the nucleus inner membrane. The catalysed reaction is S-ubiquitinyl-[E2 ubiquitin-conjugating enzyme]-L-cysteine + [acceptor protein]-L-lysine = [E2 ubiquitin-conjugating enzyme]-L-cysteine + N(6)-ubiquitinyl-[acceptor protein]-L-lysine.. Its pathway is protein modification; protein ubiquitination. Functionally, E3 ubiquitin-protein ligase that regulates cell proliferation. Involved in apoptosis regulation. Mediates ER stress-induced activation of JNK signaling pathway and apoptosis by promoting ERN1 activation and splicing of XBP1 mRNA. In Gallus gallus (Chicken), this protein is E3 ubiquitin-protein ligase RNF13.